The chain runs to 115 residues: NADH-ubiquinone oxidoreductase chain 3 (115 aa).

The next 3 helical transmembrane spans lie at 4–24 (MLIL…AFWL), 55–75 (FFLV…LLPL), and 86–106 (MLMT…AYEW).

This sequence belongs to the complex I subunit 3 family. As to quaternary structure, core subunit of respiratory chain NADH dehydrogenase (Complex I) which is composed of 45 different subunits. Interacts with TMEM186. Interacts with TMEM242.

Its subcellular location is the mitochondrion inner membrane. The enzyme catalyses a ubiquinone + NADH + 5 H(+)(in) = a ubiquinol + NAD(+) + 4 H(+)(out). Core subunit of the mitochondrial membrane respiratory chain NADH dehydrogenase (Complex I) which catalyzes electron transfer from NADH through the respiratory chain, using ubiquinone as an electron acceptor. Essential for the catalytic activity of complex I. This Microtus pennsylvanicus (Meadow vole) protein is NADH-ubiquinone oxidoreductase chain 3.